Consider the following 116-residue polypeptide: MKGPSKTTKNNTKIKLKKGDLVQVISGSDKTKTGEIIAIIYKTNKVIVKGINLKVKHKKPQQEGETGEIIKFEAPIHTSNVMLFSEQNNIASRSSVIINDKGQKIRKLKKTGELIK.

Belongs to the universal ribosomal protein uL24 family. In terms of assembly, part of the 50S ribosomal subunit.

The protein resides in the plastid. It is found in the chloroplast. In terms of biological role, one of two assembly initiator proteins, it binds directly to the 5'-end of the 23S rRNA, where it nucleates assembly of the 50S subunit. This Pyropia yezoensis (Susabi-nori) protein is Large ribosomal subunit protein uL24c (rpl24).